The primary structure comprises 577 residues: Aspartate--tRNA(Asp) ligase (577 aa).

E172 contacts L-aspartate. An aspartate region spans residues 196–199 (QLFK). L-aspartate is bound at residue R218. ATP contacts are provided by residues 218-220 (RDE) and Q227. H438 is an L-aspartate binding site. E473 is a binding site for ATP. R480 is a binding site for L-aspartate. Residue 525–528 (GFDR) coordinates ATP.

Belongs to the class-II aminoacyl-tRNA synthetase family. Type 1 subfamily. In terms of assembly, homodimer.

The protein localises to the cytoplasm. It catalyses the reaction tRNA(Asp) + L-aspartate + ATP = L-aspartyl-tRNA(Asp) + AMP + diphosphate. Functionally, catalyzes the attachment of L-aspartate to tRNA(Asp) in a two-step reaction: L-aspartate is first activated by ATP to form Asp-AMP and then transferred to the acceptor end of tRNA(Asp). Is specific for tRNA(Asp) since it cannot aspartylate tRNA(Asn). The polypeptide is Aspartate--tRNA(Asp) ligase (aspS1) (Deinococcus radiodurans (strain ATCC 13939 / DSM 20539 / JCM 16871 / CCUG 27074 / LMG 4051 / NBRC 15346 / NCIMB 9279 / VKM B-1422 / R1)).